A 712-amino-acid chain; its full sequence is Glycine--tRNA ligase beta subunit (712 aa).

Belongs to the class-II aminoacyl-tRNA synthetase family. As to quaternary structure, tetramer of two alpha and two beta subunits.

Its subcellular location is the cytoplasm. The enzyme catalyses tRNA(Gly) + glycine + ATP = glycyl-tRNA(Gly) + AMP + diphosphate. This Dechloromonas aromatica (strain RCB) protein is Glycine--tRNA ligase beta subunit.